A 571-amino-acid chain; its full sequence is Acetolactate synthase large subunit (571 aa).

Thiamine diphosphate is bound at residue glutamate 51. FAD is bound by residues arginine 153, 261 to 282 (HGTY…IGVR), and 304 to 323 (DIDP…IVGD). The segment at 394–474 (QHQMFTALYY…VLILNLNNSS (81 aa)) is thiamine pyrophosphate binding. 2 residues coordinate Mg(2+): aspartate 445 and asparagine 472.

The protein belongs to the TPP enzyme family. Dimer of large and small chains. Mg(2+) serves as cofactor. Thiamine diphosphate is required as a cofactor.

It carries out the reaction 2 pyruvate + H(+) = (2S)-2-acetolactate + CO2. The protein operates within amino-acid biosynthesis; L-isoleucine biosynthesis; L-isoleucine from 2-oxobutanoate: step 1/4. It functions in the pathway amino-acid biosynthesis; L-valine biosynthesis; L-valine from pyruvate: step 1/4. The protein is Acetolactate synthase large subunit (ilvI) of Buchnera aphidicola subsp. Acyrthosiphon pisum (strain APS) (Acyrthosiphon pisum symbiotic bacterium).